Reading from the N-terminus, the 662-residue chain is Glutathione hydrolase 7 (662 aa).

Residues M1–G106 lie on the Cytoplasmic side of the membrane. A phosphoserine mark is found at S17, S72, S79, and S83. A disordered region spans residues S26–K90. Low complexity predominate over residues S72–S83. A helical; Signal-anchor for type II membrane protein membrane pass occupies residues L107–M127. Topologically, residues Q128–L662 are extracellular. N-linked (GlcNAc...) asparagine glycans are attached at residues N198, N267, N283, N330, N353, N394, N452, N519, and N586.

Belongs to the gamma-glutamyltransferase family. In terms of assembly, heterodimer composed of the light and heavy chains. The active site is located in the light chain. Cleaved by autocatalysis into a large and a small subunit and the autocatalytic cleavage is essential to the functional activation of the enzyme.

The protein localises to the membrane. It catalyses the reaction an N-terminal (5-L-glutamyl)-[peptide] + an alpha-amino acid = 5-L-glutamyl amino acid + an N-terminal L-alpha-aminoacyl-[peptide]. It carries out the reaction glutathione + H2O = L-cysteinylglycine + L-glutamate. The catalysed reaction is an S-substituted glutathione + H2O = an S-substituted L-cysteinylglycine + L-glutamate. It functions in the pathway sulfur metabolism; glutathione metabolism. Its function is as follows. Hydrolyzes and transfers gamma-glutamyl moieties from glutathione and other gamma-glutamyl compounds to acceptors. This chain is Glutathione hydrolase 7, found in Bos taurus (Bovine).